Consider the following 343-residue polypeptide: Holliday junction branch migration complex subunit RuvB (343 aa).

Residues 1 to 178 form a large ATPase domain (RuvB-L) region; the sequence is MNFVQQNREG…FGMILELQFY (178 aa). ATP is bound by residues Leu-17, Arg-18, Gly-59, Lys-62, Thr-63, Thr-64, 125 to 127, Arg-168, Tyr-178, and Arg-215; that span reads EDY. Thr-63 is a Mg(2+) binding site. The tract at residues 179 to 249 is small ATPAse domain (RuvB-S); the sequence is TVKELMEIIK…LVEKTMDILE (71 aa). The head domain (RuvB-H) stretch occupies residues 252–343; it reads KLGLDEMDRK…DESLRKSDES (92 aa). The DNA site is built by Arg-307 and Arg-312.

Belongs to the RuvB family. In terms of assembly, homohexamer. Forms an RuvA(8)-RuvB(12)-Holliday junction (HJ) complex. HJ DNA is sandwiched between 2 RuvA tetramers; dsDNA enters through RuvA and exits via RuvB. An RuvB hexamer assembles on each DNA strand where it exits the tetramer. Each RuvB hexamer is contacted by two RuvA subunits (via domain III) on 2 adjacent RuvB subunits; this complex drives branch migration. In the full resolvosome a probable DNA-RuvA(4)-RuvB(12)-RuvC(2) complex forms which resolves the HJ.

Its subcellular location is the cytoplasm. It catalyses the reaction ATP + H2O = ADP + phosphate + H(+). Functionally, the RuvA-RuvB-RuvC complex processes Holliday junction (HJ) DNA during genetic recombination and DNA repair, while the RuvA-RuvB complex plays an important role in the rescue of blocked DNA replication forks via replication fork reversal (RFR). RuvA specifically binds to HJ cruciform DNA, conferring on it an open structure. The RuvB hexamer acts as an ATP-dependent pump, pulling dsDNA into and through the RuvAB complex. RuvB forms 2 homohexamers on either side of HJ DNA bound by 1 or 2 RuvA tetramers; 4 subunits per hexamer contact DNA at a time. Coordinated motions by a converter formed by DNA-disengaged RuvB subunits stimulates ATP hydrolysis and nucleotide exchange. Immobilization of the converter enables RuvB to convert the ATP-contained energy into a lever motion, pulling 2 nucleotides of DNA out of the RuvA tetramer per ATP hydrolyzed, thus driving DNA branch migration. The RuvB motors rotate together with the DNA substrate, which together with the progressing nucleotide cycle form the mechanistic basis for DNA recombination by continuous HJ branch migration. Branch migration allows RuvC to scan DNA until it finds its consensus sequence, where it cleaves and resolves cruciform DNA. This chain is Holliday junction branch migration complex subunit RuvB, found in Pseudothermotoga lettingae (strain ATCC BAA-301 / DSM 14385 / NBRC 107922 / TMO) (Thermotoga lettingae).